The chain runs to 312 residues: Undecaprenyl-diphosphatase (312 aa).

7 consecutive transmembrane segments (helical) span residues 74–94, 122–142, 154–174, 183–203, 226–246, 254–274, and 288–308; these read GVAF…WYFW, VSIG…KVFI, VAIA…ERIG, LDIR…IPGV, FSFL…LKTL, VGLV…YIAI, and IFIW…ISGV.

The protein belongs to the UppP family.

It is found in the cell inner membrane. The enzyme catalyses di-trans,octa-cis-undecaprenyl diphosphate + H2O = di-trans,octa-cis-undecaprenyl phosphate + phosphate + H(+). Functionally, catalyzes the dephosphorylation of undecaprenyl diphosphate (UPP). Confers resistance to bacitracin. This is Undecaprenyl-diphosphatase from Trichodesmium erythraeum (strain IMS101).